The following is a 326-amino-acid chain: D-alanine--D-alanine ligase (326 aa).

The ATP-grasp domain maps to 114 to 313; it reads KRVWLQHGLR…YAELCVSIVS (200 aa). 140–195 contributes to the ATP binding site; the sequence is PDRLGLPLILKPPHEGSTVGITKVAGYSDMKEGYAQAAKFDDEVLAEQFIAGRELT. The Mg(2+) site is built by D267, E280, and N282.

It belongs to the D-alanine--D-alanine ligase family. It depends on Mg(2+) as a cofactor. The cofactor is Mn(2+).

It is found in the cytoplasm. It carries out the reaction 2 D-alanine + ATP = D-alanyl-D-alanine + ADP + phosphate + H(+). The protein operates within cell wall biogenesis; peptidoglycan biosynthesis. Functionally, cell wall formation. This chain is D-alanine--D-alanine ligase, found in Bordetella petrii (strain ATCC BAA-461 / DSM 12804 / CCUG 43448).